The chain runs to 92 residues: Small ribosomal subunit protein uS19 (92 aa).

Belongs to the universal ribosomal protein uS19 family.

Functionally, protein S19 forms a complex with S13 that binds strongly to the 16S ribosomal RNA. This chain is Small ribosomal subunit protein uS19, found in Crocosphaera subtropica (strain ATCC 51142 / BH68) (Cyanothece sp. (strain ATCC 51142)).